The sequence spans 611 residues: Homeobox protein BEL1 homolog (611 aa).

Disordered stretches follow at residues 63–87 (QIRMTSGSDHHHHHHQTSGGTDQNQ), 101–133 (VNNDFPSEVNDERPPQRPSQGLSLSLSSSNPTS), 141–160 (LRPQQQQQQGYSGNKSTQHQ), and 174–195 (SHHQNNNNNNHQHHNHHQFQIG). The segment covering 118–133 (PSQGLSLSLSSSNPTS) has biased composition (low complexity). Residues 174-183 (SHHQNNNNNN) show a composition bias toward low complexity. Positions 197–213 (SKYLSPAQELLSEFCSL) are SR/KY domain. Residues 225 to 263 (MKHKKKQKGKQQEEWDTSHHSNNDQHDQSATTSSKKHVP) are disordered. Basic and acidic residues predominate over residues 234 to 251 (KQQEEWDTSHHSNNDQHD). The BELL domain stretch occupies residues 269 to 340 (EFMELQKRKA…CLKDGLVGQI (72 aa)). Residues 275 to 290 (KRKAKLLSMLEELKRR) carry the Bipartite nuclear localization motif. Residues 391–453 (PWRPQRGLPE…NARVRLWKPM (63 aa)) constitute a DNA-binding region (homeobox).

The protein belongs to the TALE/BELL homeobox family. As to quaternary structure, may form heterodimeric complexes with TALE/KNOX proteins STM, KNAT1/BP, KNAT2 and KNAT5. Interacts with AG-SEP1 and AG-SEP3 dimers. Interacts with KNATM, isoform KNATM-B. Interacts with BZIP30. In terms of tissue distribution, expressed in both floral and vegetative tissues.

It localises to the nucleus. Functionally, plays a major role in ovule patterning and in determination of integument identity via its interaction with MADS-box factors. Formation of complex with AG-SEP dimers negatively regulates the carpel identity process and favors the maintenance of ovule identity. BEL1-STM complex maintains the indeterminacy of the inflorescence meristem. Required, with SPL, for cytokinin-induced PIN1 expression in ovules. The chain is Homeobox protein BEL1 homolog (BEL1) from Arabidopsis thaliana (Mouse-ear cress).